The chain runs to 90 residues: uncharacterized protein (90 aa).

This is an uncharacterized protein from Homo sapiens (Human).